A 125-amino-acid polypeptide reads, in one-letter code: Glycine cleavage system H protein (125 aa).

A Lipoyl-binding domain is found at 19-101 (VGTVGISDYA…EGAAWFFKLT (83 aa)). K60 carries the post-translational modification N6-lipoyllysine.

This sequence belongs to the GcvH family. As to quaternary structure, the glycine cleavage system is composed of four proteins: P, T, L and H. (R)-lipoate is required as a cofactor.

Its function is as follows. The glycine cleavage system catalyzes the degradation of glycine. The H protein shuttles the methylamine group of glycine from the P protein to the T protein. This Paramagnetospirillum magneticum (strain ATCC 700264 / AMB-1) (Magnetospirillum magneticum) protein is Glycine cleavage system H protein.